Consider the following 292-residue polypeptide: Oxidative stress-responsive serine-rich protein 1 (292 aa).

Positions S27 to A175 are disordered. Residues S65–K83 are compositionally biased toward basic residues. 2 positions are modified to phosphothreonine: T143 and T233.

The chain is Oxidative stress-responsive serine-rich protein 1 (OSER1) from Pongo abelii (Sumatran orangutan).